We begin with the raw amino-acid sequence, 221 residues long: Probable septum site-determining protein MinC (221 aa).

Belongs to the MinC family. In terms of assembly, interacts with MinD and FtsZ.

In terms of biological role, cell division inhibitor that blocks the formation of polar Z ring septums. Rapidly oscillates between the poles of the cell to destabilize FtsZ filaments that have formed before they mature into polar Z rings. Prevents FtsZ polymerization. The protein is Probable septum site-determining protein MinC of Shewanella sp. (strain MR-7).